The following is a 250-amino-acid chain: Geranylgeranylglyceryl phosphate synthase (250 aa).

Residues D26 and S55 each contribute to the Mg(2+) site. Sn-glycerol 1-phosphate contacts are provided by residues 174–180, 205–206, and 227–228; these read YLEAGSG, GG, and GT.

This sequence belongs to the GGGP/HepGP synthase family. Group II subfamily. Mg(2+) is required as a cofactor.

Its subcellular location is the cytoplasm. It carries out the reaction sn-glycerol 1-phosphate + (2E,6E,10E)-geranylgeranyl diphosphate = sn-3-O-(geranylgeranyl)glycerol 1-phosphate + diphosphate. The protein operates within membrane lipid metabolism; glycerophospholipid metabolism. Functionally, prenyltransferase that catalyzes the transfer of the geranylgeranyl moiety of geranylgeranyl diphosphate (GGPP) to the C3 hydroxyl of sn-glycerol-1-phosphate (G1P). This reaction is the first ether-bond-formation step in the biosynthesis of archaeal membrane lipids. The sequence is that of Geranylgeranylglyceryl phosphate synthase from Nitrosopumilus maritimus (strain SCM1).